The primary structure comprises 697 residues: Pentatricopeptide repeat-containing protein 1, mitochondrial (697 aa).

A mitochondrion-targeting transit peptide spans 1-36 (MLKRAHYVALHVTLNHNGLSYQRVFSCLTQFPMLRH). 2 PPR repeats span residues 257 to 288 (RPFT…VKNK) and 294 to 328 (SDVF…NVNF).

The protein resides in the mitochondrion. Its function is as follows. Mitochondrial RNA-binding protein required for the stability of the cox2 and cox3 mRNAs. This is Pentatricopeptide repeat-containing protein 1, mitochondrial (ppr1) from Schizosaccharomyces pombe (strain 972 / ATCC 24843) (Fission yeast).